The primary structure comprises 449 residues: MRECISIHVGQAGVQIGNACWELYCLEHGIQPDGQMPSDKTIGGGDDSFNTFFSETGAGKHVPRAVFVDLEPTVIDEVRTGTYRQLFHPEQLITGKEDAANNYARGHYTIGKEIIDLVLDRIRKLADQCTGLQGFLVFHSFGGGTGSGFTSLLMERLSVDYGKKSKLEFSIYPAPQVSTAVVEPYNSILTTHTTLEHSDCAFMVDNEAIYDICRRNLDIERPTYTNLNRLISQIVSSITASLRFDGALNVDLTEFQTNLVPYPRIHFPLATYAPVISAEKAYHEQLTVAEITNACFEPANQMVKCDPRHGKYMACCLLYRGDVVPKDVNAAIATIKTKRTIQFVDWCPTGFKVGINYQPPTVVPGGDLARVQRAVCMLSNTTAIAEAWARLDHKFDLMYAKRAFVHWYVGEGMEEGEFSEAREDMAALEKDYEEVGADSAEGDDEGEEY.

The short motif at 1–4 (MREC) is the MREC motif element. Position 11 (Q11) interacts with GTP. Position 40 is an N6-acetyllysine (K40). GTP is bound by residues E71, S140, G144, T145, T179, N206, and N228. E71 is a binding site for Mg(2+). E254 is a catalytic residue. Y282 is subject to 3'-nitrotyrosine. A Phosphotyrosine modification is found at Y432. S439 carries the phosphoserine modification. Y449 is modified (3'-nitrotyrosine).

This sequence belongs to the tubulin family. As to quaternary structure, dimer of alpha and beta chains. A typical microtubule is a hollow water-filled tube with an outer diameter of 25 nm and an inner diameter of 15 nM. Alpha-beta heterodimers associate head-to-tail to form protofilaments running lengthwise along the microtubule wall with the beta-tubulin subunit facing the microtubule plus end conferring a structural polarity. Microtubules usually have 13 protofilaments but different protofilament numbers can be found in some organisms and specialized cells. Mg(2+) is required as a cofactor. Post-translationally, some glutamate residues at the C-terminus are polyglycylated, resulting in polyglycine chains on the gamma-carboxyl group. Glycylation is mainly limited to tubulin incorporated into axonemes (cilia and flagella) whereas glutamylation is prevalent in neuronal cells, centrioles, axonemes, and the mitotic spindle. Both modifications can coexist on the same protein on adjacent residues, and lowering polyglycylation levels increases polyglutamylation, and reciprocally. Cilia and flagella glycylation is required for their stability and maintenance. Flagella glycylation controls sperm motility. Some glutamate residues at the C-terminus are polyglutamylated, resulting in polyglutamate chains on the gamma-carboxyl group. Polyglutamylation plays a key role in microtubule severing by spastin (SPAST). SPAST preferentially recognizes and acts on microtubules decorated with short polyglutamate tails: severing activity by SPAST increases as the number of glutamates per tubulin rises from one to eight, but decreases beyond this glutamylation threshold. Glutamylation is also involved in cilia motility. In terms of processing, acetylation of alpha chains at Lys-40 is located inside the microtubule lumen. This modification has been correlated with increased microtubule stability, intracellular transport and ciliary assembly. Post-translationally, methylation of alpha chains at Lys-40 is found in mitotic microtubules and is required for normal mitosis and cytokinesis contributing to genomic stability. Nitration of Tyr-449 is irreversible and interferes with normal dynein intracellular distribution. In terms of processing, undergoes a tyrosination/detyrosination cycle, the cyclic removal and re-addition of a C-terminal tyrosine residue by the enzymes tubulin tyrosine carboxypeptidase (MATCAP1, VASH1 or VASH2) and tubulin tyrosine ligase (TTL), respectively. Post-translationally, tyrosination promotes microtubule interaction with CAP-Gly domain-containing proteins such as CLIP1, CLIP2 and DCTN1. Tyrosination regulates the initiation of dynein-dynactin motility via interaction with DCTN1, which brings the dynein-dynactin complex into contact with microtubules. In neurons, tyrosinated tubulins mediate the initiation of retrograde vesicle transport. Detyrosination is involved in metaphase plate congression by guiding chromosomes during mitosis: detyrosination promotes interaction with CENPE, promoting pole-proximal transport of chromosomes toward the equator. Detyrosination increases microtubules-dependent mechanotransduction in dystrophic cardiac and skeletal muscle. In cardiomyocytes, detyrosinated microtubules are required to resist to contractile compression during contraction: detyrosination promotes association with desmin (DES) at force-generating sarcomeres, leading to buckled microtubules and mechanical resistance to contraction.

It localises to the cytoplasm. The protein localises to the cytoskeleton. It catalyses the reaction GTP + H2O = GDP + phosphate + H(+). In terms of biological role, tubulin is the major constituent of microtubules, a cylinder consisting of laterally associated linear protofilaments composed of alpha- and beta-tubulin heterodimers. Microtubules grow by the addition of GTP-tubulin dimers to the microtubule end, where a stabilizing cap forms. Below the cap, tubulin dimers are in GDP-bound state, owing to GTPase activity of alpha-tubulin. The protein is Tubulin alpha-1C chain (Tuba1c) of Rattus norvegicus (Rat).